The primary structure comprises 113 residues: Putative hemolysin E-like protein (113 aa).

This sequence belongs to the hemolysin E family.

The polypeptide is Putative hemolysin E-like protein (Shigella flexneri).